A 232-amino-acid chain; its full sequence is Orotidine 5'-phosphate decarboxylase (232 aa).

Residues D13, K35, 62-71, T122, R182, Q191, G211, and R212 contribute to the substrate site; that span reads DLKFHDIPNT. K64 functions as the Proton donor in the catalytic mechanism.

It belongs to the OMP decarboxylase family. Type 1 subfamily. Homodimer.

It carries out the reaction orotidine 5'-phosphate + H(+) = UMP + CO2. It participates in pyrimidine metabolism; UMP biosynthesis via de novo pathway; UMP from orotate: step 2/2. Functionally, catalyzes the decarboxylation of orotidine 5'-monophosphate (OMP) to uridine 5'-monophosphate (UMP). The polypeptide is Orotidine 5'-phosphate decarboxylase (Pseudomonas aeruginosa (strain LESB58)).